A 304-amino-acid chain; its full sequence is MGGFVKTQKTNAYYKRFQVKFKRRRQGKTDYRARIRLTNQDKNKYNTPKYRFVVRFTNKDITAQIVYATIAGDIVMAAAYSHELPRYGLEVGLTNYAAAYCTGLLLARRVLKLRGLDQEYEGNIEATGEDYYVEPADERRPFRALLDVGLIRTTTGNRVFGALKGALDGGLDIPHSDKRFAGFKKDEKQLDSDIHRKYIYGGHVADYMRSMAEEEPEKFQAHFSEYLKKGIDADGMEALYKKVHAAIRADPTMAKSTKKEPATHKRYNLKKLTYEQRKASLVERLNALNSSAGADDDDEEEDDE.

The interval 285–304 (LNALNSSAGADDDDEEEDDE) is disordered. The segment covering 294-304 (ADDDDEEEDDE) has biased composition (acidic residues).

It belongs to the universal ribosomal protein uL18 family. As to quaternary structure, component of the large ribosomal subunit (LSU).

The protein localises to the cytoplasm. The protein resides in the nucleus. In terms of biological role, component of the ribosome, a large ribonucleoprotein complex responsible for the synthesis of proteins in the cell. The small ribosomal subunit (SSU) binds messenger RNAs (mRNAs) and translates the encoded message by selecting cognate aminoacyl-transfer RNA (tRNA) molecules. The large subunit (LSU) contains the ribosomal catalytic site termed the peptidyl transferase center (PTC), which catalyzes the formation of peptide bonds, thereby polymerizing the amino acids delivered by tRNAs into a polypeptide chain. The nascent polypeptides leave the ribosome through a tunnel in the LSU and interact with protein factors that function in enzymatic processing, targeting, and the membrane insertion of nascent chains at the exit of the ribosomal tunnel. The sequence is that of Large ribosomal subunit protein uL18 (RPL5A) from Oryza sativa subsp. indica (Rice).